The chain runs to 992 residues: Sorting nexin-19 (992 aa).

Residues 95–272 enclose the PXA domain; that stretch reads ERQLEREINR…VLVGIFSKAR (178 aa). The segment at 410-442 is disordered; sequence ALEPKDGEASEGAEAEEGPGTETETGLPVSTLN. Over residues 418 to 428 the composition is skewed to acidic residues; that stretch reads ASEGAEAEEGP. The region spanning 533–663 is the PX domain; that stretch reads LRITGTITAR…EFLALNTDAR (131 aa). The a 1,2-diacyl-sn-glycero-3-phospho-(1D-myo-inositol-3-phosphate) site is built by Arg-582 and Arg-629. Disordered regions lie at residues 692–726, 778–797, and 973–992; these read FPRSEPQSPTEELSEAETESKPQTEGKKASKSRLR, QPTKAPEKDPEQPPKGRVDS, and AATTSASDTPGNSKRMGVSS. Composition is skewed to basic and acidic residues over residues 709–719 and 782–795; these read TESKPQTEGKK and APEKDPEQPPKGRV. Positions 980–992 are enriched in polar residues; the sequence is DTPGNSKRMGVSS.

This sequence belongs to the sorting nexin family. Interacts with PTPRN.

It localises to the early endosome membrane. It is found in the cytoplasmic vesicle membrane. Functionally, plays a role in intracellular vesicle trafficking and exocytosis. May play a role in maintaining insulin-containing dense core vesicles in pancreatic beta-cells and in preventing their degradation. May play a role in insulin secretion. Interacts with membranes containing phosphatidylinositol 3-phosphate (PtdIns(3P)). This chain is Sorting nexin-19 (SNX19), found in Homo sapiens (Human).